Consider the following 626-residue polypeptide: Chaperone protein HtpG (626 aa).

The a; substrate-binding stretch occupies residues Met-1–Arg-339. The tract at residues Glu-340–Lys-555 is b. Residues Leu-556–Ser-626 are c.

This sequence belongs to the heat shock protein 90 family. Homodimer.

Its subcellular location is the cytoplasm. Its function is as follows. Molecular chaperone. Has ATPase activity. This Histophilus somni (strain 129Pt) (Haemophilus somnus) protein is Chaperone protein HtpG.